The chain runs to 73 residues: UPF0435 protein Lm4b_01721 (73 aa).

This sequence belongs to the UPF0435 family.

The chain is UPF0435 protein Lm4b_01721 from Listeria monocytogenes serotype 4b (strain CLIP80459).